The primary structure comprises 202 residues: Ribosomal RNA small subunit methyltransferase G (202 aa).

S-adenosyl-L-methionine-binding positions include Gly-75, Phe-80, 125-126, and Arg-139; that span reads VQ.

It belongs to the methyltransferase superfamily. RNA methyltransferase RsmG family.

It is found in the cytoplasm. In terms of biological role, specifically methylates the N7 position of a guanine in 16S rRNA. This Mesomycoplasma hyopneumoniae (strain 232) (Mycoplasma hyopneumoniae) protein is Ribosomal RNA small subunit methyltransferase G.